A 57-amino-acid polypeptide reads, in one-letter code: Large ribosomal subunit protein bL32 (57 aa).

Belongs to the bacterial ribosomal protein bL32 family.

The sequence is that of Large ribosomal subunit protein bL32 from Halothermothrix orenii (strain H 168 / OCM 544 / DSM 9562).